Consider the following 368-residue polypeptide: L-arabinitol 4-dehydrogenase (368 aa).

Positions 52, 77, 78, 107, 110, 113, 121, and 162 each coordinate Zn(2+). Asp210, Arg215, and Ile282 together coordinate NAD(+).

This sequence belongs to the zinc-containing alcohol dehydrogenase family. Homotetramer. Zn(2+) serves as cofactor.

The catalysed reaction is L-arabinitol + NAD(+) = L-xylulose + NADH + H(+). Plays a key role in liamocins biosynthesis by providing the arabinol moity that is linked to 3,5-dihydroxydecanoic acid (provided by the HR-PKS PKS1) via ester bond formation catalyzed by the esterase EST1. In Aureobasidium melanogenum (Aureobasidium pullulans var. melanogenum), this protein is L-arabinitol 4-dehydrogenase.